The following is a 1277-amino-acid chain: Y' element ATP-dependent helicase YEL077C (1277 aa).

The 178-residue stretch at 222–399 folds into the Helicase ATP-binding domain; it reads EIYMADTPSV…LQRIGLTGLA (178 aa). 235-242 provides a ligand contact to ATP; that stretch reads APPGYGKT. The DEAH box motif lies at 345–348; sequence DEFH. Positions 454–605 constitute a Helicase C-terminal domain; sequence ALKLLLALFE…EFYGLESKKG (152 aa). Disordered stretches follow at residues 696-763 and 775-895; these read NVRT…NATT and TTKS…NRFH. Residues 775–878 show a composition bias toward low complexity; the sequence is TTKSINSSTN…ATTTESTNAS (104 aa). A compositionally biased stretch (basic and acidic residues) spans 879 to 895; it reads AKEDANKDGNAEDNRFH.

It belongs to the helicase family. Yeast subtelomeric Y' repeat subfamily.

Its function is as follows. Catalyzes DNA unwinding and is involved in telomerase-independent telomere maintenance. The chain is Y' element ATP-dependent helicase YEL077C from Saccharomyces cerevisiae (strain ATCC 204508 / S288c) (Baker's yeast).